Here is a 480-residue protein sequence, read N- to C-terminus: M-phase inducer phosphatase cdc-25.2 (480 aa).

Over residues 1 to 20 the composition is skewed to polar residues; it reads MNRPSQISQDVAQPLSNQHE. The disordered stretch occupies residues 1–35; it reads MNRPSQISQDVAQPLSNQHETAMMSSDEDSMSRDS. The region spanning 243 to 349 is the Rhodanese domain; the sequence is FDDKYILIDC…FFFAANEANI (107 aa). A disordered region spans residues 411-452; it reads TSAPSTSTENIDTNDDCQKSRTPAVPRIASRRNLFSDPSHSP.

Belongs to the MPI phosphatase family.

It catalyses the reaction O-phospho-L-tyrosyl-[protein] + H2O = L-tyrosyl-[protein] + phosphate. Functionally, required for intestinal cell division following the 16E cell stage of embryogenesis. Regulates intestinal cell divisions and binucleations probably by modulating the activity of the cell cycle regulator wee-1.3 and by activating the cdk-1/cyb-1 complex. Plays a role in male tail development, via regulation of the cell divisions of the ray precursor cell lineages, perhaps acting together with cell cycle regulators cyl-1, cdk-1, cyb-3, and cyd-1. The chain is M-phase inducer phosphatase cdc-25.2 from Caenorhabditis elegans.